Here is a 407-residue protein sequence, read N- to C-terminus: Probable tRNA sulfurtransferase (407 aa).

The 105-residue stretch at 61 to 165 folds into the THUMP domain; the sequence is NEIIQRLSKV…MDAIYIYEKV (105 aa). ATP contacts are provided by residues 183 to 184, 208 to 209, R265, G287, and Q296; these read ML and HF.

The protein belongs to the ThiI family.

The protein resides in the cytoplasm. It carries out the reaction [ThiI sulfur-carrier protein]-S-sulfanyl-L-cysteine + a uridine in tRNA + 2 reduced [2Fe-2S]-[ferredoxin] + ATP + H(+) = [ThiI sulfur-carrier protein]-L-cysteine + a 4-thiouridine in tRNA + 2 oxidized [2Fe-2S]-[ferredoxin] + AMP + diphosphate. The enzyme catalyses [ThiS sulfur-carrier protein]-C-terminal Gly-Gly-AMP + S-sulfanyl-L-cysteinyl-[cysteine desulfurase] + AH2 = [ThiS sulfur-carrier protein]-C-terminal-Gly-aminoethanethioate + L-cysteinyl-[cysteine desulfurase] + A + AMP + 2 H(+). The protein operates within cofactor biosynthesis; thiamine diphosphate biosynthesis. Its function is as follows. Catalyzes the ATP-dependent transfer of a sulfur to tRNA to produce 4-thiouridine in position 8 of tRNAs, which functions as a near-UV photosensor. Also catalyzes the transfer of sulfur to the sulfur carrier protein ThiS, forming ThiS-thiocarboxylate. This is a step in the synthesis of thiazole, in the thiamine biosynthesis pathway. The sulfur is donated as persulfide by IscS. The polypeptide is Probable tRNA sulfurtransferase (Staphylococcus epidermidis (strain ATCC 35984 / DSM 28319 / BCRC 17069 / CCUG 31568 / BM 3577 / RP62A)).